We begin with the raw amino-acid sequence, 289 residues long: Bifunctional protein FolD 2 (289 aa).

NADP(+)-binding positions include 162 to 164 (GRS), S187, and I228.

It belongs to the tetrahydrofolate dehydrogenase/cyclohydrolase family. Homodimer.

The catalysed reaction is (6R)-5,10-methylene-5,6,7,8-tetrahydrofolate + NADP(+) = (6R)-5,10-methenyltetrahydrofolate + NADPH. It catalyses the reaction (6R)-5,10-methenyltetrahydrofolate + H2O = (6R)-10-formyltetrahydrofolate + H(+). It functions in the pathway one-carbon metabolism; tetrahydrofolate interconversion. Catalyzes the oxidation of 5,10-methylenetetrahydrofolate to 5,10-methenyltetrahydrofolate and then the hydrolysis of 5,10-methenyltetrahydrofolate to 10-formyltetrahydrofolate. The polypeptide is Bifunctional protein FolD 2 (Deinococcus geothermalis (strain DSM 11300 / CIP 105573 / AG-3a)).